The chain runs to 105 residues: Urease subunit beta (105 aa).

The protein belongs to the urease beta subunit family. Heterotrimer of UreA (gamma), UreB (beta) and UreC (alpha) subunits. Three heterotrimers associate to form the active enzyme.

Its subcellular location is the cytoplasm. The enzyme catalyses urea + 2 H2O + H(+) = hydrogencarbonate + 2 NH4(+). It participates in nitrogen metabolism; urea degradation; CO(2) and NH(3) from urea (urease route): step 1/1. This is Urease subunit beta from Pseudomonas entomophila (strain L48).